A 437-amino-acid polypeptide reads, in one-letter code: Adenylosuccinate synthetase (437 aa).

Residues G25–K31, G53–T55, and K62 each bind GTP. D26 functions as the Proton acceptor in the catalytic mechanism. Mg(2+) contacts are provided by D26 and G53. IMP contacts are provided by residues D26 to K29 and N51 to H54. H54 acts as the Proton donor in catalysis. IMP is bound by residues T141, R155, N232, and T247. Residue T307 coordinates GTP. T307–R313 provides a ligand contact to substrate. Residue R311 coordinates IMP. GTP contacts are provided by residues R313, K339–D341, and G425–G427.

It belongs to the adenylosuccinate synthetase family. As to quaternary structure, homodimer. Mg(2+) is required as a cofactor.

Its subcellular location is the cytoplasm. The enzyme catalyses IMP + L-aspartate + GTP = N(6)-(1,2-dicarboxyethyl)-AMP + GDP + phosphate + 2 H(+). It functions in the pathway purine metabolism; AMP biosynthesis via de novo pathway; AMP from IMP: step 1/2. In terms of biological role, plays an important role in the salvage pathway for purine nucleotide biosynthesis. Catalyzes the first committed step in the biosynthesis of AMP from IMP. The sequence is that of Adenylosuccinate synthetase from Plasmodium vivax (strain Salvador I).